Here is a 465-residue protein sequence, read N- to C-terminus: Cysteine--tRNA ligase (465 aa).

A Zn(2+)-binding site is contributed by cysteine 27. The 'HIGH' region signature appears at 29 to 39 (PTVYDEVHIGH). Cysteine 204, histidine 229, and glutamate 233 together coordinate Zn(2+). The 'KMSKS' region signature appears at 261–265 (KMSKS). Lysine 264 contacts ATP.

It belongs to the class-I aminoacyl-tRNA synthetase family. Zn(2+) is required as a cofactor.

It is found in the cytoplasm. The catalysed reaction is tRNA(Cys) + L-cysteine + ATP = L-cysteinyl-tRNA(Cys) + AMP + diphosphate. The polypeptide is Cysteine--tRNA ligase (Metallosphaera sedula (strain ATCC 51363 / DSM 5348 / JCM 9185 / NBRC 15509 / TH2)).